The primary structure comprises 503 residues: Cytochrome P450 3A7 (503 aa).

Cys442 contributes to the heme binding site.

It belongs to the cytochrome P450 family. Heme serves as cofactor. In terms of tissue distribution, expressed in fetal liver (at protein level).

The protein resides in the endoplasmic reticulum membrane. It localises to the microsome membrane. It catalyses the reaction an organic molecule + reduced [NADPH--hemoprotein reductase] + O2 = an alcohol + oxidized [NADPH--hemoprotein reductase] + H2O + H(+). It carries out the reaction 3beta-hydroxyandrost-5-en-17-one + reduced [NADPH--hemoprotein reductase] + O2 = 3beta,16alpha-dihydroxy-androst-5-en-17-one + oxidized [NADPH--hemoprotein reductase] + H2O + H(+). The enzyme catalyses dehydroepiandrosterone 3-sulfate + reduced [NADPH--hemoprotein reductase] + O2 = 16alpha-hydroxydehydroepiandrosterone 3-sulfate + oxidized [NADPH--hemoprotein reductase] + H2O + H(+). The catalysed reaction is testosterone + reduced [NADPH--hemoprotein reductase] + O2 = 6beta,17beta-dihydroxyandrost-4-en-3-one + oxidized [NADPH--hemoprotein reductase] + H2O + H(+). It catalyses the reaction estrone + reduced [NADPH--hemoprotein reductase] + O2 = 2-hydroxyestrone + oxidized [NADPH--hemoprotein reductase] + H2O + H(+). It carries out the reaction estrone + reduced [NADPH--hemoprotein reductase] + O2 = 4-hydroxyestrone + oxidized [NADPH--hemoprotein reductase] + H2O + H(+). The enzyme catalyses estrone + reduced [NADPH--hemoprotein reductase] + O2 = 16alpha-hydroxyestrone + oxidized [NADPH--hemoprotein reductase] + H2O + H(+). The catalysed reaction is 17beta-estradiol + reduced [NADPH--hemoprotein reductase] + O2 = 2-hydroxy-17beta-estradiol + oxidized [NADPH--hemoprotein reductase] + H2O + H(+). It catalyses the reaction 17beta-estradiol + reduced [NADPH--hemoprotein reductase] + O2 = 6beta-hydroxyestradiol-17beta + oxidized [NADPH--hemoprotein reductase] + H2O + H(+). It carries out the reaction all-trans-retinoate + reduced [NADPH--hemoprotein reductase] + O2 = all-trans-4-hydroxyretinoate + oxidized [NADPH--hemoprotein reductase] + H2O + H(+). The enzyme catalyses all-trans-retinoate + reduced [NADPH--hemoprotein reductase] + O2 = all-trans-18-hydroxyretinoate + oxidized [NADPH--hemoprotein reductase] + H2O + H(+). It participates in steroid hormone biosynthesis. It functions in the pathway cofactor metabolism; retinol metabolism. A cytochrome P450 monooxygenase involved in the metabolism of steroid hormones and vitamins during embryogenesis. Mechanistically, uses molecular oxygen inserting one oxygen atom into a substrate, and reducing the second into a water molecule, with two electrons provided by NADPH via cytochrome P450 reductase (NADPH--hemoprotein reductase). Catalyzes the hydroxylation of carbon-hydrogen bonds. Metabolizes 3beta-hydroxyandrost-5-en-17-one (dehydroepiandrosterone, DHEA), a precursor in the biosynthesis of androgen and estrogen steroid hormones. Exhibits high catalytic activity for the formation of hydroxyestrogens from estrone (E1), particularly D-ring hydroxylated estrone at the C16-alpha position. Mainly hydroxylates all trans-retinoic acid (atRA) to 4-hydroxyretinoate and may play a role in atRA clearance during fetal development. Also involved in the oxidative metabolism of xenobiotics including anticonvulsants. The chain is Cytochrome P450 3A7 from Homo sapiens (Human).